Reading from the N-terminus, the 593-residue chain is Aspartate--tRNA(Asp/Asn) ligase (593 aa).

E172 contributes to the L-aspartate binding site. The segment at 196-199 (QLFK) is aspartate. R218 is an L-aspartate binding site. ATP-binding positions include 218-220 (RDE) and Q227. H450 serves as a coordination point for L-aspartate. E484 is a binding site for ATP. R491 is an L-aspartate binding site. Residue 536–539 (GLDR) participates in ATP binding.

Belongs to the class-II aminoacyl-tRNA synthetase family. Type 1 subfamily. As to quaternary structure, homodimer.

It localises to the cytoplasm. The enzyme catalyses tRNA(Asx) + L-aspartate + ATP = L-aspartyl-tRNA(Asx) + AMP + diphosphate. Functionally, aspartyl-tRNA synthetase with relaxed tRNA specificity since it is able to aspartylate not only its cognate tRNA(Asp) but also tRNA(Asn). Reaction proceeds in two steps: L-aspartate is first activated by ATP to form Asp-AMP and then transferred to the acceptor end of tRNA(Asp/Asn). The polypeptide is Aspartate--tRNA(Asp/Asn) ligase (Nitrosomonas europaea (strain ATCC 19718 / CIP 103999 / KCTC 2705 / NBRC 14298)).